Here is a 422-residue protein sequence, read N- to C-terminus: Secernin-3 (422 aa).

The propeptide occupies 1–5; sequence MEPCS. Cysteine 6 is a catalytic residue. Residue cysteine 6 is modified to Glyoxylic acid (Cys); alternate. At cysteine 6 the chain carries Pyruvic acid (Cys); alternate.

Belongs to the peptidase C69 family. Secernin subfamily.

Plays a role in thermal nociception. The sequence is that of Secernin-3 (SCRN3) from Bos taurus (Bovine).